Here is a 334-residue protein sequence, read N- to C-terminus: Retinol dehydrogenase 14 (334 aa).

Glycine 51–glycine 57 is an NADP(+) binding site. Substrate is bound at residue serine 190. The active-site Proton acceptor is tyrosine 215.

The protein belongs to the short-chain dehydrogenases/reductases (SDR) family.

The catalysed reaction is all-trans-retinol + NADP(+) = all-trans-retinal + NADPH + H(+). The enzyme catalyses 11-cis-retinol + NADP(+) = 11-cis-retinal + NADPH + H(+). It carries out the reaction 9-cis-retinol + NADP(+) = 9-cis-retinal + NADPH + H(+). Functionally, retinol dehydrogenase with a clear preference for NADP. Displays high activity towards 9-cis, 11-cis and all-trans-retinol. Shows a very weak activity towards 13-cis-retinol. Has no activity towards steroids. The chain is Retinol dehydrogenase 14 (Rdh14) from Mus musculus (Mouse).